Consider the following 551-residue polypeptide: Nicotianamine aminotransferase B (551 aa).

Residues 24 to 127 (KSNGHGVAAA…GHAAAAAEEE (104 aa)) form a disordered region. Basic and acidic residues predominate over residues 86–96 (GHRESNGHAEA). Positions 111–123 (AANGESNGHAAAA) are enriched in low complexity. N6-(pyridoxal phosphate)lysine is present on Lys379.

It belongs to the class-I pyridoxal-phosphate-dependent aminotransferase family. The cofactor is pyridoxal 5'-phosphate. Expressed in roots, but not in leaves.

The catalysed reaction is nicotianamine + 2-oxoglutarate = 3''-deamino-3''-oxonicotianamine + L-glutamate. Its function is as follows. Involved in biosynthesis of mugineic acid family phytosiderophores. The sequence is that of Nicotianamine aminotransferase B from Hordeum vulgare (Barley).